A 606-amino-acid chain; its full sequence is Medium-chain acyl-CoA ligase ACSF2, mitochondrial (606 aa).

A mitochondrion-targeting transit peptide spans 1-13; it reads MSSKILLTNLRTS. Residues 256-264, Asp-484, Arg-499, and Lys-590 contribute to the ATP site; that span reads TSGTTGKPK.

The protein belongs to the ATP-dependent AMP-binding enzyme family.

The protein resides in the mitochondrion. It catalyses the reaction a medium-chain fatty acid + ATP + CoA = a medium-chain fatty acyl-CoA + AMP + diphosphate. It carries out the reaction octanoate + ATP + CoA = octanoyl-CoA + AMP + diphosphate. Functionally, acyl-CoA synthases catalyze the initial reaction in fatty acid metabolism, by forming a thioester with CoA. Has some preference toward medium-chain substrates. Plays a role in adipocyte differentiation. The sequence is that of Medium-chain acyl-CoA ligase ACSF2, mitochondrial from Danio rerio (Zebrafish).